The chain runs to 485 residues: MDDSLGVSEVVMIPFMKREVLQQICAILDTDNTWETIAPYMPGIELRDVEGCKRYSSYNQSPSELLLRIWSSKGYSTTHLYQLFAKTKLIRLMRMMRSQVHEKYHYLENKVTNSTSRVSKQMVQPPGSQSASRLKKTEIKESSPSPAAAAASQLSRSNTDDTLRVAIEGTLPVTYCELLEATNGFAVSNVIGKGGYGTVYKGELKGTGGIVAVKRLHSGNDTSQNGSRERLRQSLTELRTLARFRHDNILPIYAYSLEGSEPCLVYQFMSNGSLEDRLLCRKGSVPLTWIQRKEISIGAGRGLGFLHSFGKTPIIHGDIKTANILLDKHMEPKIGDFGLCRDGHVEAEAMEKHPLIASHIKGTLAYLAPEFITSKILTTKLDVYSFGIVLLEIASGQRAYSDSRETRGLVEYCQVNKELAAHRKIPVREIFIDRRAPPLVGDEEKSFLDALIEVGLAGANNDRKVRPTMSQIVEYLCKNSIPPVV.

Positions 115–132 (TSRVSKQMVQPPGSQSAS) are enriched in polar residues. The segment at 115–155 (TSRVSKQMVQPPGSQSASRLKKTEIKESSPSPAAAAASQLS) is disordered. Positions 142-152 (SSPSPAAAAAS) are enriched in low complexity. The region spanning 185–485 (FAVSNVIGKG…LCKNSIPPVV (301 aa)) is the Protein kinase domain. Residues 191–199 (IGKGGYGTV) and lysine 214 contribute to the ATP site. Aspartate 318 serves as the catalytic Proton acceptor.

Belongs to the protein kinase superfamily. TKL Ser/Thr protein kinase family. Pelle subfamily. Interacts with actl-1. Expressed in the nervous system.

The enzyme catalyses L-seryl-[protein] + ATP = O-phospho-L-seryl-[protein] + ADP + H(+). It carries out the reaction L-threonyl-[protein] + ATP = O-phospho-L-threonyl-[protein] + ADP + H(+). Its function is as follows. Through association with the adapter actl-1, may act downstream of the receptor complex composed of ilcr-1 and ilcr-2, which is a signaling complex that modulates neuronal activity and animal behavior in response to sensory neuron input. In Caenorhabditis elegans, this protein is Pelle-like serine/threonine-protein kinase pik-1.